The following is a 419-amino-acid chain: Transcription termination factor Rho (419 aa).

In terms of domain architecture, Rho RNA-BD spans 48–123 (DIFGDGVLEI…LKVNAVNYDK (76 aa)). 3 RNA-binding regions span residues 61–66 (GFGFLR), 78–80 (DIY), and 108–110 (ERY). ATP contacts are provided by residues 169–174 (GRGQRG), 181–186 (KAGKTI), and Arg-212. The RNA-binding 2 stretch occupies residues 284–288 (VLTGG).

Belongs to the Rho family. As to quaternary structure, homohexamer. The homohexamer assembles into an open ring structure.

In terms of biological role, facilitates transcription termination by a mechanism that involves Rho binding to the nascent RNA, activation of Rho's RNA-dependent ATPase activity, and release of the mRNA from the DNA template. In Buchnera aphidicola subsp. Schizaphis graminum (strain Sg), this protein is Transcription termination factor Rho.